The sequence spans 164 residues: Hoefavidin (164 aa).

An N-terminal signal peptide occupies residues 1–22 (MNKVLAIVLTITVAGFAQTAFA). In terms of domain architecture, Avidin-like spans 32–155 (KLLAGASNWV…GQDDFMQSVA (124 aa)). 5 residues coordinate biotin: asparagine 42, serine 46, tyrosine 68, asparagine 70, and glycine 76. The cysteines at positions 77 and 108 are disulfide-linked. Serine 110, threonine 112, and aspartate 148 together coordinate biotin.

This sequence belongs to the avidin/streptavidin family. In terms of assembly, exhibits a dynamic oligomeric assembly: the apo form exits as homooctamers, which dissociate into homodimers upon biotin binding. The X-ray structure of the intact hoefavidin reveals unique crystal packing generated by an octameric cylindrical structure wherein the C-terminal segments of each monomer are introduced into the entrance of the biotin-binding site of an adjacent non-canonical monomer.

The protein localises to the secreted. In terms of biological role, the exact role played by hoefavidin in the host organism is still obscure. Forms a strong non-covalent complex with biotin and 2-iminobiotin. This chain is Hoefavidin, found in Hoeflea phototrophica (strain DSM 17068 / NCIMB 14078 / DFL-43).